The primary structure comprises 207 residues: Cytochrome c biogenesis ATP-binding export protein CcmA (207 aa).

The region spanning 4-207 (LEARELLCER…RISLTQTGAA (204 aa)) is the ABC transporter domain. Residue 36 to 43 (GSNGAGKT) coordinates ATP.

This sequence belongs to the ABC transporter superfamily. CcmA exporter (TC 3.A.1.107) family. The complex is composed of two ATP-binding proteins (CcmA) and two transmembrane proteins (CcmB).

The protein resides in the cell inner membrane. It catalyses the reaction heme b(in) + ATP + H2O = heme b(out) + ADP + phosphate + H(+). Part of the ABC transporter complex CcmAB involved in the biogenesis of c-type cytochromes; once thought to export heme, this seems not to be the case, but its exact role is uncertain. Responsible for energy coupling to the transport system. This is Cytochrome c biogenesis ATP-binding export protein CcmA from Escherichia coli O6:H1 (strain CFT073 / ATCC 700928 / UPEC).